The following is a 213-amino-acid chain: Sclerostin (213 aa).

The N-terminal stretch at 1–23 (MQLPLALCLVCLLVHTAFRVVEG) is a signal peptide. A disordered region spans residues 41-71 (GEYPEPPPELENNKTMNRAENGGRPPHHPFE). Residue Asn-53 is glycosylated (N-linked (GlcNAc...) asparagine). 4 disulfides stabilise this stretch: Cys-80–Cys-134, Cys-94–Cys-148, Cys-105–Cys-165, and Cys-109–Cys-167. A CTCK domain is found at 82–172 (ELHFTRYVTD…ASCKCKRLTR (91 aa)). The N-linked (GlcNAc...) asparagine glycan is linked to Asn-175. The interval 178 to 213 (ELKDFGTEAARPQKGRKPRPRARSAKANQAELENAY) is disordered. A compositionally biased stretch (basic residues) spans 190–201 (QKGRKPRPRARS).

This sequence belongs to the sclerostin family. As to quaternary structure, interacts with LRP4 (via the extracellular domain); the interaction facilitates the inhibition of Wnt signaling. Interacts with LRP5 (via the first two YWTD-EGF repeat domains); the interaction inhibits Wnt-mediated signaling. Interacts with LRP6. Widely expressed at low levels with highest levels in bone, cartilage, kidney, liver, bone marrow and primary osteoblasts differentiated for 21 days. Detected in the subendothelial layer of the aortic intima (at protein level).

It is found in the secreted. It localises to the extracellular space. Its subcellular location is the extracellular matrix. Its function is as follows. Negative regulator of bone growth that acts through inhibition of Wnt signaling and bone formation. This is Sclerostin from Homo sapiens (Human).